The primary structure comprises 367 residues: Queuine tRNA-ribosyltransferase (367 aa).

Asp92 functions as the Proton acceptor in the catalytic mechanism. Substrate contacts are provided by residues 92–96, Asp146, Gln188, and Gly215; that span reads DSGGF. Residues 246 to 252 are RNA binding; sequence GVGTPKD. Asp265 functions as the Nucleophile in the catalytic mechanism. Zn(2+)-binding residues include Cys303, Cys305, Cys308, and His334.

This sequence belongs to the queuine tRNA-ribosyltransferase family. As to quaternary structure, homodimer. Within each dimer, one monomer is responsible for RNA recognition and catalysis, while the other monomer binds to the replacement base PreQ1. It depends on Zn(2+) as a cofactor.

The catalysed reaction is 7-aminomethyl-7-carbaguanine + guanosine(34) in tRNA = 7-aminomethyl-7-carbaguanosine(34) in tRNA + guanine. It functions in the pathway tRNA modification; tRNA-queuosine biosynthesis. Functionally, catalyzes the base-exchange of a guanine (G) residue with the queuine precursor 7-aminomethyl-7-deazaguanine (PreQ1) at position 34 (anticodon wobble position) in tRNAs with GU(N) anticodons (tRNA-Asp, -Asn, -His and -Tyr). Catalysis occurs through a double-displacement mechanism. The nucleophile active site attacks the C1' of nucleotide 34 to detach the guanine base from the RNA, forming a covalent enzyme-RNA intermediate. The proton acceptor active site deprotonates the incoming PreQ1, allowing a nucleophilic attack on the C1' of the ribose to form the product. After dissociation, two additional enzymatic reactions on the tRNA convert PreQ1 to queuine (Q), resulting in the hypermodified nucleoside queuosine (7-(((4,5-cis-dihydroxy-2-cyclopenten-1-yl)amino)methyl)-7-deazaguanosine). The chain is Queuine tRNA-ribosyltransferase from Francisella tularensis subsp. tularensis (strain FSC 198).